Reading from the N-terminus, the 172-residue chain is HTH-type transcriptional regulator IscR (172 aa).

One can recognise an HTH rrf2-type domain in the interval 2–131 (RLTSKGRYAV…NNITLGELMR (130 aa)). The H-T-H motif DNA-binding region spans 28 to 51 (LADISERQGISLSYLEQLFSRLRK). Positions 92, 98, and 104 each coordinate [2Fe-2S] cluster.

The cofactor is [2Fe-2S] cluster.

Its function is as follows. Regulates the transcription of several operons and genes involved in the biogenesis of Fe-S clusters and Fe-S-containing proteins. This Photobacterium profundum (strain SS9) protein is HTH-type transcriptional regulator IscR.